The chain runs to 268 residues: UPF0719 transmembrane protein aq_1349 (268 aa).

8 consecutive transmembrane segments (helical) span residues 5-24 (LIALFWVIFSKYVFDVLFFR), 37-59 (NLALSLSYAGYFLGLAFSFYSVY), 69-91 (LYLIFVSFTLLLGVYIFDLIFLR), 104-126 (AGAGITQGIYFLSLGILISASFW), 130-152 (SFILSVIYSLIYLSLGMVMLFIS), 173-195 (FSASLVLGSITLGVSVVLYGAIS), 210-232 (VLYFVVSQVLMVIFYVVVEFLLF), and 245-267 (NLSASLILSATFIASAFITLAVM).

Belongs to the UPF0719 family.

It localises to the cell membrane. This Aquifex aeolicus (strain VF5) protein is UPF0719 transmembrane protein aq_1349.